A 692-amino-acid chain; its full sequence is Elongation factor G (692 aa).

In terms of domain architecture, tr-type G spans 8–282; the sequence is ENTRNIGIMA…AVIDYLPSPL (275 aa). Residues 17–24, 81–85, and 135–138 contribute to the GTP site; these read AHIDAGKT, DTPGH, and NKMD.

It belongs to the TRAFAC class translation factor GTPase superfamily. Classic translation factor GTPase family. EF-G/EF-2 subfamily.

It localises to the cytoplasm. Functionally, catalyzes the GTP-dependent ribosomal translocation step during translation elongation. During this step, the ribosome changes from the pre-translocational (PRE) to the post-translocational (POST) state as the newly formed A-site-bound peptidyl-tRNA and P-site-bound deacylated tRNA move to the P and E sites, respectively. Catalyzes the coordinated movement of the two tRNA molecules, the mRNA and conformational changes in the ribosome. The sequence is that of Elongation factor G from Bacillus cereus (strain ZK / E33L).